We begin with the raw amino-acid sequence, 327 residues long: Phenylalanine--tRNA ligase alpha subunit (327 aa).

A Mg(2+)-binding site is contributed by E252.

Belongs to the class-II aminoacyl-tRNA synthetase family. Phe-tRNA synthetase alpha subunit type 1 subfamily. As to quaternary structure, tetramer of two alpha and two beta subunits. Mg(2+) serves as cofactor.

It is found in the cytoplasm. The enzyme catalyses tRNA(Phe) + L-phenylalanine + ATP = L-phenylalanyl-tRNA(Phe) + AMP + diphosphate + H(+). The protein is Phenylalanine--tRNA ligase alpha subunit of Shewanella woodyi (strain ATCC 51908 / MS32).